We begin with the raw amino-acid sequence, 281 residues long: Bifunctional protein FolD (281 aa).

NADP(+)-binding positions include 165 to 167 (GRS) and Ser-190.

Belongs to the tetrahydrofolate dehydrogenase/cyclohydrolase family. Homodimer.

The enzyme catalyses (6R)-5,10-methylene-5,6,7,8-tetrahydrofolate + NADP(+) = (6R)-5,10-methenyltetrahydrofolate + NADPH. It catalyses the reaction (6R)-5,10-methenyltetrahydrofolate + H2O = (6R)-10-formyltetrahydrofolate + H(+). It functions in the pathway one-carbon metabolism; tetrahydrofolate interconversion. Catalyzes the oxidation of 5,10-methylenetetrahydrofolate to 5,10-methenyltetrahydrofolate and then the hydrolysis of 5,10-methenyltetrahydrofolate to 10-formyltetrahydrofolate. This is Bifunctional protein FolD from Polaromonas naphthalenivorans (strain CJ2).